The sequence spans 944 residues: Trehalose monomycolate exporter MmpL3 (944 aa).

Residues 1-13 (MFAWWGRTVYRYR) lie on the Cytoplasmic side of the membrane. Residues 14–34 (FIVIGVMVALCLGGGVFGLSL) traverse the membrane as a helical segment. Residues 35 to 185 (GKHVTQSGFY…TIATDQRRME (151 aa)) are Periplasmic-facing. 40-44 (QSGFY) serves as a coordination point for a 1,2-diacylglycero-3-phosphoethanolamine. A helical membrane pass occupies residues 186-206 (VLALPLVAVVLFFVFGGVIAA). At 207-209 (GLP) the chain is on the cytoplasmic side. A helical transmembrane segment spans residues 210 to 230 (VMVGGLCIAGALGIMRFLAIF). At 231–235 (GPVHY) the chain is on the periplasmic side. The chain crosses the membrane as a helical span at residues 236–256 (FAQPVVSLIGLGIAIDYGLFI). The Cytoplasmic portion of the chain corresponds to 257–286 (VSRFREEIAEGYDTETAVRRTVITAGRTVT). A helical transmembrane segment spans residues 287-307 (FSAVLIVASAIGLLLFPQGFL). The Periplasmic portion of the chain corresponds to 308–314 (KSLTYAT). A helical transmembrane segment spans residues 315–335 (IASVMLSAILSITVLPACLGI). Residues 336-396 (LGKHVDALGV…KLVNRVMKRP (61 aa)) are Cytoplasmic-facing. A helical transmembrane segment spans residues 397–417 (VLFAAPIVIIMILLIIPVGKL). Residues 418–562 (SLGGISEKYL…HGLFAKMPLM (145 aa)) lie on the Periplasmic side of the membrane. Residues 563–583 (VVILLTTTIVLMFLAFGSVVL) form a helical membrane-spanning segment. The Cytoplasmic segment spans residues 584–586 (PIK). The helical transmembrane segment at 587-607 (ATLMSALTLGSTMGILTWIFV) threads the bilayer. Residues 608 to 616 (DGHFSKWLN) lie on the Periplasmic side of the membrane. Residues 617-637 (FTPTPLTAPVIGLIIALVFGL) traverse the membrane as a helical segment. The Cytoplasmic portion of the chain corresponds to 638 to 672 (STDYEVFLVSRMVEARERGMSTQEAIRIGTAATGR). The helical transmembrane segment at 673–693 (IITAAALIVAVVAGAFVFSDL) threads the bilayer. The Periplasmic portion of the chain corresponds to 694-698 (VMMKY). A helical transmembrane segment spans residues 699 to 719 (LAFGLMAALLLDATVVRMFLV). Over 720–944 (PSVMKLLGDD…QDLLRREGRL (225 aa)) the chain is Cytoplasmic. The segment at 778–944 (AAGDPRPPHD…QDLLRREGRL (167 aa)) is disordered. Residues 791–828 (PLAESPRPARSSPASSPELTPALEATAAPAAPSGASTT) are compositionally biased toward low complexity. The segment covering 829–839 (RMQIGSSTEPP) has biased composition (polar residues). Over residues 855-866 (STPPPTPTPPSA) the composition is skewed to pro residues.

It belongs to the resistance-nodulation-cell division (RND) (TC 2.A.6) family. MmpL subfamily. As to quaternary structure, monomer. Interacts with TtfA (via N-terminus); active trehalose monomycolate (TMM) biosynthesis is not required for the complex formation.

The protein resides in the cell inner membrane. It localises to the cell septum. The protein localises to the cell tip. Inhibited by the antitubercular drug SQ109. Also inhibited by several other compounds such as the pyrrole derivative BM212, the adamantyl urea derivative AU1235, the benzimidazole C215, indoleamides, tetrahydropyrazolo[1,5-a]pyrimidine-3-carboxamide (THPP) and N-benzyl-6',7'-dihydrospiro[piperidine-4,4'-thieno[3,2-c]pyran] (Spiro) analogs. Inhibitory effects of these compounds, including SQ109, are most likely due to their ability to dissipate the transmembrane electrochemical proton gradient. In terms of biological role, transports trehalose monomycolate (TMM) to the cell wall. Flips TMM across the inner membrane. Membrane potential is not required for this function. Transports probably phosphatidylethanolamine (PE) as well. Binds specifically both TMM and PE, but not trehalose dimycolate (TDM). Also binds diacylglycerol (DAG) and other phospholipids, including phosphatidylglycerol (PG), phosphatidylinositol (PI), and cardiolipin (CDL). Contributes to membrane potential, cell wall composition, antibiotic susceptibility and fitness. Could also be part of a heme-iron acquisition system. Is the target of the antitubercular drug SQ109. This Mycobacterium tuberculosis (strain ATCC 25618 / H37Rv) protein is Trehalose monomycolate exporter MmpL3 (mmpL3).